A 377-amino-acid chain; its full sequence is D-alanine--D-alanine ligase (377 aa).

One can recognise an ATP-grasp domain in the interval 140 to 349; it reads KELLTVNNIR…NVELVDKLID (210 aa). 170-225 is an ATP binding site; that stretch reads VKDLGDVVFVKAANQGSSVGVSRAKTADEFEAALTDSFQYDYKVLIEAAVKGPREL. Mg(2+)-binding residues include Asp-303, Glu-316, and Asn-318.

This sequence belongs to the D-alanine--D-alanine ligase family. Requires Mg(2+) as cofactor. It depends on Mn(2+) as a cofactor.

It localises to the cytoplasm. The enzyme catalyses 2 D-alanine + ATP = D-alanyl-D-alanine + ADP + phosphate + H(+). Its pathway is cell wall biogenesis; peptidoglycan biosynthesis. Functionally, cell wall formation. In Leuconostoc citreum (strain KM20), this protein is D-alanine--D-alanine ligase.